A 174-amino-acid chain; its full sequence is Small ribosomal subunit protein uS5c (174 aa).

Residues 17-80 (WEERVVQVKR…TDAKKHLVTV (64 aa)) form the S5 DRBM domain.

The protein belongs to the universal ribosomal protein uS5 family. Part of the 30S ribosomal subunit. Contacts protein S4.

It is found in the plastid. It localises to the chloroplast. Its function is as follows. With S4 and S12 plays an important role in translational accuracy. This is Small ribosomal subunit protein uS5c (rps5) from Pyropia yezoensis (Susabi-nori).